The sequence spans 267 residues: Cilia- and flagella-associated protein 300 (267 aa).

This sequence belongs to the CFAP300 family. In terms of assembly, interacts with DNAAF2.

The protein localises to the cytoplasm. It localises to the cytoskeleton. The protein resides in the cilium axoneme. Cilium- and flagellum-specific protein that plays a role in axonemal structure organization and motility. May play a role in outer and inner dynein arm assembly. This is Cilia- and flagella-associated protein 300 from Bos taurus (Bovine).